The sequence spans 203 residues: MSSSSDKLFNRDRTIHEILGGGIVADVMLWRKKNVSVGIVTVTIASWMVFEAFAYTIFTLISSVLLLLLSILFLWSKSASILNRPSPPLPEFQISEAMAEEASIWLRIHVNKLLQVSHDIAMARDSELYTKVAVSLFLLSLIGSLMDFQTLCHTSVLVVMTVPAFYERYEDYIVGSIEFICNKTRELYLRLEIWANPENKKLS.

Residues 24 to 203 (VADVMLWRKK…WANPENKKLS (180 aa)) form the Reticulon domain. A run of 3 helical transmembrane segments spans residues 34–54 (NVSV…EAFA), 55–75 (YTIF…LFLW), and 132–152 (VAVS…QTLC).

It localises to the endoplasmic reticulum membrane. This Arabidopsis thaliana (Mouse-ear cress) protein is Reticulon-like protein B12 (RTNLB12).